The chain runs to 416 residues: Exodeoxyribonuclease 7 large subunit (416 aa).

It belongs to the XseA family. As to quaternary structure, heterooligomer composed of large and small subunits.

It localises to the cytoplasm. It catalyses the reaction Exonucleolytic cleavage in either 5'- to 3'- or 3'- to 5'-direction to yield nucleoside 5'-phosphates.. In terms of biological role, bidirectionally degrades single-stranded DNA into large acid-insoluble oligonucleotides, which are then degraded further into small acid-soluble oligonucleotides. The protein is Exodeoxyribonuclease 7 large subunit of Nitratiruptor sp. (strain SB155-2).